We begin with the raw amino-acid sequence, 509 residues long: Steroid 17-alpha-hydroxylase/17,20 lyase (509 aa).

Asn-202 is a binding site for substrate. Cys-442 is a binding site for heme.

The protein belongs to the cytochrome P450 family. The cofactor is heme.

It is found in the endoplasmic reticulum membrane. The protein localises to the microsome membrane. It carries out the reaction a C21-steroid + reduced [NADPH--hemoprotein reductase] + O2 = a 17alpha-hydroxy-C21-steroid + oxidized [NADPH--hemoprotein reductase] + H2O + H(+). The catalysed reaction is progesterone + reduced [NADPH--hemoprotein reductase] + O2 = 17alpha-hydroxyprogesterone + oxidized [NADPH--hemoprotein reductase] + H2O + H(+). It catalyses the reaction pregnenolone + reduced [NADPH--hemoprotein reductase] + O2 = 17alpha-hydroxypregnenolone + oxidized [NADPH--hemoprotein reductase] + H2O + H(+). The enzyme catalyses 17alpha-hydroxyprogesterone + reduced [NADPH--hemoprotein reductase] + O2 = androst-4-ene-3,17-dione + acetate + oxidized [NADPH--hemoprotein reductase] + H2O + 2 H(+). It carries out the reaction 17alpha-hydroxyprogesterone + reduced [NADPH--hemoprotein reductase] + O2 = 16alpha,17alpha-dihydroxyprogesterone + oxidized [NADPH--hemoprotein reductase] + H2O + H(+). The catalysed reaction is 16alpha,17alpha-dihydroxyprogesterone + reduced [NADPH--hemoprotein reductase] + O2 = 6beta,16alpha,17alpha-trihydroxyprogesterone + oxidized [NADPH--hemoprotein reductase] + H2O + H(+). It catalyses the reaction 17alpha-hydroxypregnenolone + reduced [NADPH--hemoprotein reductase] + O2 = 3beta-hydroxyandrost-5-en-17-one + acetate + oxidized [NADPH--hemoprotein reductase] + H2O + 2 H(+). The enzyme catalyses 16alpha,17alpha-dihydroxypregnenolone + reduced [NADPH--hemoprotein reductase] + O2 = 3beta,16alpha-dihydroxy-androst-5-en-17-one + acetate + oxidized [NADPH--hemoprotein reductase] + H2O + 2 H(+). It carries out the reaction 3beta-hydroxyandrost-5-en-17-one + reduced [NADPH--hemoprotein reductase] + O2 = 3beta,16alpha-dihydroxy-androst-5-en-17-one + oxidized [NADPH--hemoprotein reductase] + H2O + H(+). The catalysed reaction is androst-4-ene-3,17-dione + reduced [NADPH--hemoprotein reductase] + O2 = 16alpha-hydroxyandrost-4-ene-3,17-dione + oxidized [NADPH--hemoprotein reductase] + H2O + H(+). It functions in the pathway steroid hormone biosynthesis. It participates in steroid biosynthesis; glucocorticoid biosynthesis. With respect to regulation, regulated predominantly by intracellular cAMP levels. The 17,20-lyase activity is stimulated by cytochrome b5, which acts as an allosteric effector increasing the Vmax of the lyase activity. Its function is as follows. A cytochrome P450 monooxygenase involved in corticoid and androgen biosynthesis. Catalyzes 17-alpha hydroxylation of C21 steroids, which is common for both pathways. A second oxidative step, required only for androgen synthesis, involves an acyl-carbon cleavage. The 17-alpha hydroxy intermediates, as part of adrenal glucocorticoids biosynthesis pathway, are precursors of cortisol. Hydroxylates steroid hormones, pregnenolone and progesterone to form 17-alpha hydroxy metabolites, followed by the cleavage of the C17-C20 bond to form C19 steroids, dehydroepiandrosterone (DHEA) and androstenedione. Has 16-alpha hydroxylase activity. Catalyzes 16-alpha hydroxylation of 17-alpha hydroxy pregnenolone, followed by the cleavage of the C17-C20 bond to form 16-alpha-hydroxy DHEA. Also 16-alpha hydroxylates androgens, relevant for estriol synthesis. Mechanistically, uses molecular oxygen inserting one oxygen atom into a substrate, and reducing the second into a water molecule, with two electrons provided by NADPH via cytochrome P450 reductase (CPR; NADPH-ferrihemoprotein reductase). The protein is Steroid 17-alpha-hydroxylase/17,20 lyase (CYP17A1) of Sus scrofa (Pig).